A 74-amino-acid polypeptide reads, in one-letter code: Small, acid-soluble spore protein Tlp (74 aa).

Residues 38–74 are disordered; that stretch reads AEELSSKEKDELSSKNERRKESVDGLRSEIKDEADSQ.

Belongs to the Tlp family.

The protein localises to the spore core. The chain is Small, acid-soluble spore protein Tlp from Oceanobacillus iheyensis (strain DSM 14371 / CIP 107618 / JCM 11309 / KCTC 3954 / HTE831).